The primary structure comprises 586 residues: Potassium-transporting ATPase potassium-binding subunit (586 aa).

Helical transmembrane passes span 11–31, 67–87, 136–156, 179–199, 279–299, 306–326, 351–371, 381–401, 403–423, 442–462, 507–527, and 551–571; these read LFLV…AKVF, AVAV…ILML, GLAV…IAVI, LYVL…QGVI, VEIF…GVMV, WAIL…LQGV, FGLA…CGAV, LGGM…GGVG, GLYT…LMIG, IITV…AMIT, ILGS…VLAM, and FALW…FPAL.

This sequence belongs to the KdpA family. The system is composed of three essential subunits: KdpA, KdpB and KdpC.

It is found in the cell inner membrane. Functionally, part of the high-affinity ATP-driven potassium transport (or Kdp) system, which catalyzes the hydrolysis of ATP coupled with the electrogenic transport of potassium into the cytoplasm. This subunit binds the periplasmic potassium ions and delivers the ions to the membrane domain of KdpB through an intramembrane tunnel. This Geobacter metallireducens (strain ATCC 53774 / DSM 7210 / GS-15) protein is Potassium-transporting ATPase potassium-binding subunit.